The sequence spans 162 residues: Cyanate hydratase (162 aa).

Active-site residues include Arg103, Glu106, and Ser129.

The protein belongs to the cyanase family.

It catalyses the reaction cyanate + hydrogencarbonate + 3 H(+) = NH4(+) + 2 CO2. In terms of biological role, catalyzes the reaction of cyanate with bicarbonate to produce ammonia and carbon dioxide. The protein is Cyanate hydratase of Phaeosphaeria nodorum (strain SN15 / ATCC MYA-4574 / FGSC 10173) (Glume blotch fungus).